The primary structure comprises 319 residues: Cytochrome c biogenesis protein CcsA (319 aa).

7 consecutive transmembrane segments (helical) span residues 9 to 29 (ILTH…LITL), 44 to 64 (GVIG…AYSG), 71 to 91 (LYES…FPYF), 143 to 163 (MVLG…LLVI), 225 to 245 (IISL…VWAN), 259 to 273 (TWAF…IYLH), and 286 to 306 (AIVA…VNLL).

The protein belongs to the CcmF/CycK/Ccl1/NrfE/CcsA family. In terms of assembly, may interact with Ccs1.

The protein resides in the plastid. The protein localises to the chloroplast thylakoid membrane. Functionally, required during biogenesis of c-type cytochromes (cytochrome c6 and cytochrome f) at the step of heme attachment. This Oenothera biennis (German evening primrose) protein is Cytochrome c biogenesis protein CcsA.